Consider the following 107-residue polypeptide: Large ribosomal subunit protein bL21c (107 aa).

Belongs to the bacterial ribosomal protein bL21 family. As to quaternary structure, part of the 50S ribosomal subunit.

The protein localises to the plastid. It is found in the chloroplast. Functionally, this protein binds to 23S rRNA. The protein is Large ribosomal subunit protein bL21c of Cyanidioschyzon merolae (strain NIES-3377 / 10D) (Unicellular red alga).